We begin with the raw amino-acid sequence, 238 residues long: Ribonuclease PH (238 aa).

Residues Arg-86 and 124–126 each bind phosphate; that span reads GTR.

The protein belongs to the RNase PH family. Homohexameric ring arranged as a trimer of dimers.

It carries out the reaction tRNA(n+1) + phosphate = tRNA(n) + a ribonucleoside 5'-diphosphate. In terms of biological role, phosphorolytic 3'-5' exoribonuclease that plays an important role in tRNA 3'-end maturation. Removes nucleotide residues following the 3'-CCA terminus of tRNAs; can also add nucleotides to the ends of RNA molecules by using nucleoside diphosphates as substrates, but this may not be physiologically important. Probably plays a role in initiation of 16S rRNA degradation (leading to ribosome degradation) during starvation. The sequence is that of Ribonuclease PH from Chelativorans sp. (strain BNC1).